The primary structure comprises 1489 residues: ABC transporter FUM19 (1489 aa).

10 consecutive transmembrane segments (helical) span residues 33 to 53 (IIFFIAPSCVFTALTFVRIFV), 84 to 104 (CFSSSQVLGLVAGMTTAALSY), 116 to 136 (LLSIYLFLSLLLDIAHDRTLW), 143 to 163 (LEYGFSSVFSAAVAIKAFAVW), 264 to 284 (LLLPVLPRIALIGLSLAQAFL), 302 to 322 (WGLIGATVLIYGGISICTSLY), 373 to 393 (FLNLHELWANIVEAGLAAWFL), 397 to 417 (VGIAFIAPIGLVLLSFLGVSI), 482 to 502 (IASLIIAFAPDLTAPGIMLAA), and 511 to 531 (HKVYTAIALLTLLTVPLGSIF). The 268-residue stretch at 272-539 (IALIGLSLAQ…IFRSVSPLMS (268 aa)) folds into the ABC transmembrane type-1 1 domain. The ABC transporter 1 domain maps to 591-823 (VKVIQASFGW…YQSHLQSLCI (233 aa)). N-linked (GlcNAc...) asparagine glycosylation is found at asparagine 612 and asparagine 616. 625–632 (GPVGSGKS) is an ATP binding site. The N-linked (GlcNAc...) asparagine glycan is linked to asparagine 670. Basic and acidic residues predominate over residues 852–862 (EQTRSSRRGAD). Residues 852 to 874 (EQTRSSRRGADNQETIASGADSS) form a disordered region. Positions 863-874 (NQETIASGADSS) are enriched in polar residues. 6 helical membrane passes run 890-910 (AVPPVAIISFVTSSLSYGFLY), 945-965 (ILALLSELLTMYLALTYFALI), 977-999 (AITRAPLYFFASVDLGTITNYFS), 1031-1051 (AASSPYLAASYPLCFFLLYFV), 1120-1140 (WLLFILNTFVSLLALFTVALV), and 1149-1169 (GFAGAGLISLMQIGQFLTNVV). One can recognise an ABC transmembrane type-1 2 domain in the interval 902–1187 (SSLSYGFLYS…SMGAVSRLKA (286 aa)). The ABC transporter 2 domain occupies 1214–1485 (IKIDGVSASY…KEGKFRALWE (272 aa)). An ATP-binding site is contributed by 1254 to 1261 (GRTGSGKS).

The protein belongs to the ABC transporter superfamily. ABCC family. Conjugate transporter (TC 3.A.1.208) subfamily.

It is found in the cell membrane. Functionally, ABC transporter that may provide the dual role of fumonisin export and self-protection by allowing the fungus to evade the harmful effect of its own fumonisin production. Plays a role in the repression of the gene cluster that mediates fumonisin biosynthesis. The protein is ABC transporter FUM19 of Gibberella moniliformis (strain M3125 / FGSC 7600) (Maize ear and stalk rot fungus).